The chain runs to 375 residues: MNTSHFLAPLFPGSLQGKNGTNPLDSPYNFSDGCQDSAELLAFIITTYSIETILGVLGNLCLIFVTTRQKEKSNVTNLLIANLAFSDFLMCLICQPLTVTYTIMDYWIFGEVLCKMLTFIQCMSVTVSILSLVLVALERHQLIINPTGWKPSIFQAYLGIVVIWFVSCFLSLPFLANSTLNDLFHYNHSKVVEFLEDKVVCFVSWSSDHHRLIYTTFLLLFQYCIPLAFILVCYIRIYQRLQRQKHVFHAHACSSRAGQMKRINSMLMTMVTAFAVLWLPLHVFNTLEDWYQEAIPACHGNLIFLMCHLLAMASTCVNPFIYGFLNINFKKDIKALVLTCHCRSPRGESEHLPLSTVHTDLSKGSMRMGSKSNFI.

Topologically, residues 1-39 (MNTSHFLAPLFPGSLQGKNGTNPLDSPYNFSDGCQDSAE) are extracellular. Residues Asn-2, Asn-19, and Asn-29 are each glycosylated (N-linked (GlcNAc...) asparagine). A helical transmembrane segment spans residues 40 to 60 (LLAFIITTYSIETILGVLGNL). The Cytoplasmic portion of the chain corresponds to 61–78 (CLIFVTTRQKEKSNVTNL). A helical membrane pass occupies residues 79–99 (LIANLAFSDFLMCLICQPLTV). Over 100–116 (TYTIMDYWIFGEVLCKM) the chain is Extracellular. A disulfide bond links Cys-114 and Cys-201. Residues 117–137 (LTFIQCMSVTVSILSLVLVAL) traverse the membrane as a helical segment. Topologically, residues 138-155 (ERHQLIINPTGWKPSIFQ) are cytoplasmic. Residues 156 to 176 (AYLGIVVIWFVSCFLSLPFLA) traverse the membrane as a helical segment. Residues 177–211 (NSTLNDLFHYNHSKVVEFLEDKVVCFVSWSSDHHR) lie on the Extracellular side of the membrane. Asn-187 carries an N-linked (GlcNAc...) asparagine glycan. A helical transmembrane segment spans residues 212-232 (LIYTTFLLLFQYCIPLAFILV). The Cytoplasmic segment spans residues 233–266 (CYIRIYQRLQRQKHVFHAHACSSRAGQMKRINSM). The helical transmembrane segment at 267 to 287 (LMTMVTAFAVLWLPLHVFNTL) threads the bilayer. The Extracellular portion of the chain corresponds to 288–301 (EDWYQEAIPACHGN). The helical transmembrane segment at 302–322 (LIFLMCHLLAMASTCVNPFIY) threads the bilayer. The Cytoplasmic portion of the chain corresponds to 323–375 (GFLNINFKKDIKALVLTCHCRSPRGESEHLPLSTVHTDLSKGSMRMGSKSNFI). Residue Cys-340 is the site of S-palmitoyl cysteine attachment.

This sequence belongs to the G-protein coupled receptor 1 family. Heart, detected in small intestine.

The protein localises to the cell membrane. In terms of biological role, g protein-coupled receptor for PPY/pancreatic polypeptide/PP that is negatively coupled to cAMP. Has much lower affinity for the NPY/neuropeptide Y and PYY/peptide YY. The sequence is that of Neuropeptide Y receptor type 4 (Npy4r) from Mus musculus (Mouse).